The sequence spans 524 residues: Bifunctional purine biosynthesis protein PurH (524 aa).

Positions 1-145 constitute an MGS-like domain; it reads MIKQALLSVS…KNHRDVTVIV (145 aa).

This sequence belongs to the PurH family.

It carries out the reaction (6R)-10-formyltetrahydrofolate + 5-amino-1-(5-phospho-beta-D-ribosyl)imidazole-4-carboxamide = 5-formamido-1-(5-phospho-D-ribosyl)imidazole-4-carboxamide + (6S)-5,6,7,8-tetrahydrofolate. The enzyme catalyses IMP + H2O = 5-formamido-1-(5-phospho-D-ribosyl)imidazole-4-carboxamide. Its pathway is purine metabolism; IMP biosynthesis via de novo pathway; 5-formamido-1-(5-phospho-D-ribosyl)imidazole-4-carboxamide from 5-amino-1-(5-phospho-D-ribosyl)imidazole-4-carboxamide (10-formyl THF route): step 1/1. It functions in the pathway purine metabolism; IMP biosynthesis via de novo pathway; IMP from 5-formamido-1-(5-phospho-D-ribosyl)imidazole-4-carboxamide: step 1/1. This chain is Bifunctional purine biosynthesis protein PurH, found in Cupriavidus taiwanensis (strain DSM 17343 / BCRC 17206 / CCUG 44338 / CIP 107171 / LMG 19424 / R1) (Ralstonia taiwanensis (strain LMG 19424)).